Here is a 1260-residue protein sequence, read N- to C-terminus: uncharacterized protein (1260 aa).

Its subcellular location is the plastid. The protein resides in the chloroplast. This is an uncharacterized protein from Ostreococcus tauri.